A 924-amino-acid polypeptide reads, in one-letter code: TBC1 domain family member 2A (924 aa).

The tract at residues 1-38 (MEDTPERTPSSESIQPPGLAREPEVTSPGDSEGCARPL) is disordered. The interaction with CADH1 stretch occupies residues 1 to 167 (MEDTPERTPS…TENGPTLHLK (167 aa)). Residues 42–140 (PKKLCGYLSK…WLQQLQMKRW (99 aa)) form the PH domain. The interval 228–296 (KQAQATAHGP…KRQSNTFPFF (69 aa)) is disordered. Positions 261 to 270 (IPEKEPEDPP) are enriched in basic and acidic residues. The interval 297 to 435 (SDGLARSRTA…KLTEDLAQPQ (139 aa)) is interaction with RAC1. 3 coiled-coil regions span residues 303–332 (SRTA…ELVI), 361–418 (LELV…AKQQ), and 444–477 (FLSQ…QVTK). The 193-residue stretch at 621–813 (GVPREHRPRV…RVWDAFLYEG (193 aa)) folds into the Rab-GAP TBC domain. The stretch at 871–906 (MKQLRQLRAAHRERLEAELRELELLKAEYLERRASR) forms a coiled coil. Serine 916 is modified (phosphoserine).

Interacts with activated RAC1 and CDH1.

The protein localises to the cytoplasm. It is found in the cytoplasmic vesicle. The protein resides in the cell junction. Functionally, acts as a GTPase-activating protein for RAB7A. Signal effector acting as a linker between RAC1 and RAB7A, leading to RAB7A inactivation and subsequent inhibition of cadherin degradation and reduced cell-cell adhesion. The sequence is that of TBC1 domain family member 2A (Tbc1d2) from Rattus norvegicus (Rat).